We begin with the raw amino-acid sequence, 325 residues long: Probable cell division protein WhiA (325 aa).

The segment at residues 280-313 is a DNA-binding region (H-T-H motif); the sequence is SLKELGSMLKNPLGKSGVNHRLRKIDKIAEELRK.

This sequence belongs to the WhiA family.

Its function is as follows. Involved in cell division and chromosome segregation. This Caldicellulosiruptor saccharolyticus (strain ATCC 43494 / DSM 8903 / Tp8T 6331) protein is Probable cell division protein WhiA.